A 275-amino-acid chain; its full sequence is MSNKITILLAVLLAVVACAQAHASHQRRVPYPLPRFLPRPHHTVSNHRIVGGFEIDVAETPYQVSLQRSKRHICGGSVLSGKWILTAAHCTDGSQPASLTVRLGSSRHASGGSVIHVARIVQHPDYDQETIDYDYSLLELESVLTFSNKVQPIALPEQDEAVEDGIMTIVSGWGSTKSAIESNAILRAANVPTVNQDECNQAYHKSEGITERMLCAGYQQGGKDACQGDSGGPLVAEDKLIGVVSWGAGCAQPGYPGVYARVAVVRDWIRETCGV.

A signal peptide spans 1–18 (MSNKITILLAVLLAVVAC). A propeptide spans 19 to 48 (AQAHASHQRRVPYPLPRFLPRPHHTVSNHR) (activation peptide). The Peptidase S1 domain maps to 49 to 274 (IVGGFEIDVA…VRDWIRETCG (226 aa)). Cysteine 74 and cysteine 90 are joined by a disulfide. Catalysis depends on charge relay system residues histidine 89 and aspartate 134. 2 disulfides stabilise this stretch: cysteine 199–cysteine 215 and cysteine 226–cysteine 250. The active-site Charge relay system is serine 230.

The protein belongs to the peptidase S1 family. In terms of tissue distribution, expressed in the midgut. Expression levels drop a few hours after blood feeding and pick up again 28 hours later.

It is found in the secreted. It carries out the reaction Preferential cleavage: Arg-|-Xaa, Lys-|-Xaa.. Its function is as follows. Constitutive trypsin that is expressed 2 days after emergence, coinciding with host seeking behavior of the female. The chain is Trypsin-4 (TRYP4) from Anopheles gambiae (African malaria mosquito).